Reading from the N-terminus, the 413-residue chain is Aspartate aminotransferase, cytoplasmic (413 aa).

Residues G39, W141, and N195 each coordinate L-aspartate. K259 is modified (N6-(pyridoxal phosphate)lysine). R387 provides a ligand contact to L-aspartate.

The protein belongs to the class-I pyridoxal-phosphate-dependent aminotransferase family. Homodimer. Requires pyridoxal 5'-phosphate as cofactor.

The protein localises to the cytoplasm. It catalyses the reaction L-aspartate + 2-oxoglutarate = oxaloacetate + L-glutamate. The catalysed reaction is L-cysteine + 2-oxoglutarate = 2-oxo-3-sulfanylpropanoate + L-glutamate. The enzyme catalyses (2S)-2-aminobutanoate + 2-oxoglutarate = 2-oxobutanoate + L-glutamate. It carries out the reaction 3-sulfino-L-alanine + 2-oxoglutarate = 3-sulfinopyruvate + L-glutamate. Its function is as follows. Biosynthesis of L-glutamate from L-aspartate or L-cysteine. Important regulator of levels of glutamate, the major excitatory neurotransmitter of the vertebrate central nervous system. Acts as a scavenger of glutamate in brain neuroprotection. The aspartate aminotransferase activity is involved in hepatic glucose synthesis during development and in adipocyte glyceroneogenesis. Using L-cysteine as substrate, regulates levels of mercaptopyruvate, an important source of hydrogen sulfide. Mercaptopyruvate is converted into H(2)S via the action of 3-mercaptopyruvate sulfurtransferase (3MST). Hydrogen sulfide is an important synaptic modulator and neuroprotectant in the brain. The sequence is that of Aspartate aminotransferase, cytoplasmic from Bos taurus (Bovine).